The primary structure comprises 147 residues: Ribonuclease pancreatic gamma-type (147 aa).

An N-terminal signal peptide occupies residues 1 to 25; it reads MGLEKSFLLFSLLVLVLGWVQPSLG. Residues Lys-35 and Arg-38 each contribute to the substrate site. The Proton acceptor role is filled by His-40. Cystine bridges form between Cys-54–Cys-112, Cys-68–Cys-123, Cys-86–Cys-138, and Cys-93–Cys-100. Residues 69-73, Lys-94, and Arg-113 each bind substrate; that span reads KPMNT. Catalysis depends on His-142, which acts as the Proton donor.

This sequence belongs to the pancreatic ribonuclease family. In terms of assembly, monomer.

Its subcellular location is the secreted. The enzyme catalyses an [RNA] containing cytidine + H2O = an [RNA]-3'-cytidine-3'-phosphate + a 5'-hydroxy-ribonucleotide-3'-[RNA].. It catalyses the reaction an [RNA] containing uridine + H2O = an [RNA]-3'-uridine-3'-phosphate + a 5'-hydroxy-ribonucleotide-3'-[RNA].. Its function is as follows. Endonuclease that catalyzes the cleavage of RNA on the 3' side of pyrimidine nucleotides. Acts on single-stranded and double-stranded RNA. This chain is Ribonuclease pancreatic gamma-type, found in Rattus rattus (Black rat).